We begin with the raw amino-acid sequence, 181 residues long: Dehydration-responsive element-binding protein 1E (181 aa).

The Nuclear localization signal signature appears at 14-26 (KKRAGRRIFKETR). Residues 29 to 86 (IYRGVRRRDGDKWVCEVREPIHQRRVWLGTYPTADMAARAHDVAVLALRGRSACLNFS) constitute a DNA-binding region (AP2/ERF).

It belongs to the AP2/ERF transcription factor family. ERF subfamily.

Its subcellular location is the nucleus. Its function is as follows. Transcriptional activator that binds specifically to the DNA sequence 5'-[AG]CCGAC-3'. Binding to the C-repeat/DRE element mediates cold or dehydration-inducible transcription. CBF/DREB1 factors play a key role in freezing tolerance and cold acclimation. In Arabidopsis thaliana (Mouse-ear cress), this protein is Dehydration-responsive element-binding protein 1E (DREB1E).